The following is a 212-amino-acid chain: Thymidylate kinase (212 aa).

ATP is bound at residue 10–17; it reads GLEGAGKT.

It belongs to the thymidylate kinase family.

The catalysed reaction is dTMP + ATP = dTDP + ADP. Functionally, phosphorylation of dTMP to form dTDP in both de novo and salvage pathways of dTTP synthesis. The chain is Thymidylate kinase from Photorhabdus laumondii subsp. laumondii (strain DSM 15139 / CIP 105565 / TT01) (Photorhabdus luminescens subsp. laumondii).